A 79-amino-acid chain; its full sequence is Serine protease inhibitor Kazal-type 1 (79 aa).

The signal sequence occupies residues 1–18 (MKVAIIFLLSALALLSLA). One can recognise a Kazal-like domain in the interval 26–79 (NGKTPNCPKQIMGCPRIYDPVCGTNGITYPSECSLCFENRKFGTSIHIQRRGTC). Disulfide bonds link C32–C61, C39–C58, and C47–C79.

The protein localises to the secreted. In terms of biological role, serine protease inhibitor which exhibits anti-trypsin activity. In the pancreas, protects against trypsin-catalyzed premature activation of zymogens. Functionally, in the male reproductive tract, binds to sperm heads where it modulates sperm capacitance by inhibiting calcium uptake and nitrogen oxide (NO) production. The chain is Serine protease inhibitor Kazal-type 1 from Rattus norvegicus (Rat).